The chain runs to 173 residues: Alkyl hydroperoxide reductase AhpD (173 aa).

Catalysis depends on C131, which acts as the Proton donor. C131 and C134 are joined by a disulfide. The Cysteine sulfenic acid (-SOH) intermediate role is filled by C134.

It belongs to the AhpD family.

It carries out the reaction N(6)-[(R)-dihydrolipoyl]-L-lysyl-[lipoyl-carrier protein] + a hydroperoxide = N(6)-[(R)-lipoyl]-L-lysyl-[lipoyl-carrier protein] + an alcohol + H2O. Functionally, antioxidant protein with alkyl hydroperoxidase activity. Required for the reduction of the AhpC active site cysteine residues and for the regeneration of the AhpC enzyme activity. This chain is Alkyl hydroperoxide reductase AhpD, found in Rhizorhabdus wittichii (strain DSM 6014 / CCUG 31198 / JCM 15750 / NBRC 105917 / EY 4224 / RW1) (Sphingomonas wittichii).